Here is a 102-residue protein sequence, read N- to C-terminus: PE family immunomodulator PE5 (102 aa).

Positions 3 to 92 (LRVVPEGLAA…GASYLAGDAA (90 aa)) constitute a PE domain.

The protein belongs to the mycobacterial PE family.

The protein resides in the secreted. Its subcellular location is the cell envelope. It localises to the cell surface. Its function is as follows. Important for the siderophore-mediated iron-acquisition function of ESX-3. May play a pivotal role in the evasion of host immune response by M.tuberculosis. Mediates production of IL-10 via activation of the p38 and ERK1/2 mitogen-activated protein kinase (MAPK) signaling pathways. The sequence is that of PE family immunomodulator PE5 from Mycobacterium tuberculosis (strain ATCC 25618 / H37Rv).